Here is a 415-residue protein sequence, read N- to C-terminus: Histidine--tRNA ligase (415 aa).

The protein belongs to the class-II aminoacyl-tRNA synthetase family. As to quaternary structure, homodimer.

The protein resides in the cytoplasm. It catalyses the reaction tRNA(His) + L-histidine + ATP = L-histidyl-tRNA(His) + AMP + diphosphate + H(+). This Clostridium perfringens (strain SM101 / Type A) protein is Histidine--tRNA ligase.